The following is a 265-amino-acid chain: Insulin-like growth factor-binding protein 2-B (265 aa).

Positions 1 to 17 (MSLALLCSLLLVHGSLG) are cleaved as a signal peptide. Positions 19-99 (IVFRCPSCTA…IQGLGRCENK (81 aa)) constitute an IGFBP N-terminal domain. 6 cysteine pairs are disulfide-bonded: Cys23–Cys49, Cys26–Cys51, Cys34–Cys52, Cys41–Cys55, Cys63–Cys76, and Cys70–Cys96. A compositionally biased stretch (polar residues) spans 107 to 122 (TNQESAAHSGEVNGTR). Disordered stretches follow at residues 107–128 (TNQE…PMKK) and 144–170 (HHNN…SQCQ). The 83-residue stretch at 166–248 (QSQCQQELDK…SDKVRGDPNC (83 aa)) folds into the Thyroglobulin type-1 domain. Disulfide bonds link Cys169/Cys203, Cys214/Cys225, and Cys227/Cys248. Residues 238–265 (SSDKVRGDPNCSQYYGGPELEPPTAQQK) are disordered. The short motif at 243-245 (RGD) is the Cell attachment site element.

As to quaternary structure, interacts with igf2. Interacts with igf1. As to expression, in early embryos, expressed at a low level in most tissues with expression becoming abundant in the liver by 96 hours post-fertilization (hpf). The expression pattern in adults exhibits sexual dimorphism; in adult males expression is limited exclusively to the liver whereas in adult females expression is observed in the liver and other tissues including the gut, kidney, ovary and muscle.

It is found in the secreted. IGF-binding proteins prolong the half-life of the IGFs and have been shown to either inhibit or stimulate the growth promoting effects of the IGFs on cell culture. They alter the interaction of IGFs with their cell surface receptors. This is Insulin-like growth factor-binding protein 2-B from Danio rerio (Zebrafish).